Reading from the N-terminus, the 166-residue chain is MTTQGITVLGIDPGSRTTGWGIVREVSGVLTLVDCGAVRPRGDEFSDRLGAIYHGLHEVIARHMPDEASVENVFTAKNAASALKLGQARGAAVAACAAHHLPVASYAPTEIKKTIVGVGRAEKEQVSFMVARLLGVKGDWGPDTGDALAAAICHLNMRRLRRLAAG.

Residues Asp12, Glu71, and Asp143 contribute to the active site. The Mg(2+) site is built by Asp12, Glu71, and Asp143.

The protein belongs to the RuvC family. As to quaternary structure, homodimer which binds Holliday junction (HJ) DNA. The HJ becomes 2-fold symmetrical on binding to RuvC with unstacked arms; it has a different conformation from HJ DNA in complex with RuvA. In the full resolvosome a probable DNA-RuvA(4)-RuvB(12)-RuvC(2) complex forms which resolves the HJ. Mg(2+) is required as a cofactor.

It localises to the cytoplasm. The catalysed reaction is Endonucleolytic cleavage at a junction such as a reciprocal single-stranded crossover between two homologous DNA duplexes (Holliday junction).. The RuvA-RuvB-RuvC complex processes Holliday junction (HJ) DNA during genetic recombination and DNA repair. Endonuclease that resolves HJ intermediates. Cleaves cruciform DNA by making single-stranded nicks across the HJ at symmetrical positions within the homologous arms, yielding a 5'-phosphate and a 3'-hydroxyl group; requires a central core of homology in the junction. The consensus cleavage sequence is 5'-(A/T)TT(C/G)-3'. Cleavage occurs on the 3'-side of the TT dinucleotide at the point of strand exchange. HJ branch migration catalyzed by RuvA-RuvB allows RuvC to scan DNA until it finds its consensus sequence, where it cleaves and resolves the cruciform DNA. The chain is Crossover junction endodeoxyribonuclease RuvC from Oleidesulfovibrio alaskensis (strain ATCC BAA-1058 / DSM 17464 / G20) (Desulfovibrio alaskensis).